The primary structure comprises 828 residues: DNA gyrase subunit A (828 aa).

The Topo IIA-type catalytic domain maps to 32-497 (LPDVRDGLKP…EVLSLEDEDL (466 aa)). The O-(5'-phospho-DNA)-tyrosine intermediate role is filled by Tyr120. Residues 524 to 530 (QKRGGRG) carry the GyrA-box motif.

The protein belongs to the type II topoisomerase GyrA/ParC subunit family. Heterotetramer, composed of two GyrA and two GyrB chains. In the heterotetramer, GyrA contains the active site tyrosine that forms a transient covalent intermediate with DNA, while GyrB binds cofactors and catalyzes ATP hydrolysis.

It is found in the cytoplasm. The catalysed reaction is ATP-dependent breakage, passage and rejoining of double-stranded DNA.. Functionally, a type II topoisomerase that negatively supercoils closed circular double-stranded (ds) DNA in an ATP-dependent manner to modulate DNA topology and maintain chromosomes in an underwound state. Negative supercoiling favors strand separation, and DNA replication, transcription, recombination and repair, all of which involve strand separation. Also able to catalyze the interconversion of other topological isomers of dsDNA rings, including catenanes and knotted rings. Type II topoisomerases break and join 2 DNA strands simultaneously in an ATP-dependent manner. This is DNA gyrase subunit A from Streptococcus pyogenes serotype M3 (strain ATCC BAA-595 / MGAS315).